We begin with the raw amino-acid sequence, 582 residues long: MSKDLYKEDILYKKRHSIAHVMAEAVCDLFPNTKIAIGPPIKDGFYYDFEFKNPITEDSLLDIENRMREILKTGSSFEKEIISLEQALEIFKDEPYKIDLIKNFDLQNEISIYKSHNFIDLCRGPHVDNMNKIDPKAFKLTGIAGAYWRGNEKNTMLTRIYGTLWNNEKELRSYLNLREEIKKRDHRKLGKELDLFSIHEEIGPGLIFFHPNGAKIRALIEDFWREEHSKNGYDILFTPHVGKSWLWQTSGHLNFYKDSMFEKIEMDKSDYYLKPMNCPFHIAIYNTGKHSYRDLPFRWAELGTVYRYEKIGALHGMMRARGFTQDDAHIICTHSQVVDEIKEVLRFAIYMWSKFGFNSLKAYLSTKPDKSVGNNSDWEMSLKVLKEALSDFEVPYEIDKGGGAFYGPKIDLKIVDSLEREWQMSTIQFDFNLPERFNMTYTSEDGKEKRPFMIHRALLGSIERFFGILVEHYGGAFPLWLSHVQAVIIPVNNIVEDYTIKVFNKFKNAGIRIKLDNSSSRMNAKIREYQAKKIPYMFIIGEREAIEERISIRTRTNEQINGIELDEALKLILLKVRDKEIS.

A catalytic region spans residues 185–478; sequence DHRKLGKELD…LVEHYGGAFP (294 aa). Cys278, His329, and His455 together coordinate Zn(2+).

It belongs to the class-II aminoacyl-tRNA synthetase family. As to quaternary structure, homodimer. It depends on Zn(2+) as a cofactor.

The protein localises to the cytoplasm. The catalysed reaction is tRNA(Thr) + L-threonine + ATP = L-threonyl-tRNA(Thr) + AMP + diphosphate + H(+). Its function is as follows. Catalyzes the attachment of threonine to tRNA(Thr) in a two-step reaction: L-threonine is first activated by ATP to form Thr-AMP and then transferred to the acceptor end of tRNA(Thr). Also edits incorrectly charged L-seryl-tRNA(Thr). The sequence is that of Threonine--tRNA ligase from Borrelia garinii subsp. bavariensis (strain ATCC BAA-2496 / DSM 23469 / PBi) (Borreliella bavariensis).